Consider the following 677-residue polypeptide: Threonine--tRNA ligase (677 aa).

One can recognise a TGS domain in the interval 1–59 (MAQATISITVNGEAKEVEATTTGVELFAEDKNIIAVKINGENRDLYTPLNDGDTVDPIA). Residues 255-561 (DHRKLGAEMD…LLEHYAGAFP (307 aa)) are catalytic. Positions 360, 411, and 538 each coordinate Zn(2+).

The protein belongs to the class-II aminoacyl-tRNA synthetase family. As to quaternary structure, homodimer. The cofactor is Zn(2+).

The protein localises to the cytoplasm. The enzyme catalyses tRNA(Thr) + L-threonine + ATP = L-threonyl-tRNA(Thr) + AMP + diphosphate + H(+). Catalyzes the attachment of threonine to tRNA(Thr) in a two-step reaction: L-threonine is first activated by ATP to form Thr-AMP and then transferred to the acceptor end of tRNA(Thr). Also edits incorrectly charged L-seryl-tRNA(Thr). In Bifidobacterium longum (strain DJO10A), this protein is Threonine--tRNA ligase.